The following is a 214-amino-acid chain: Orotate phosphoribosyltransferase (214 aa).

Residue Lys-26 participates in 5-phospho-alpha-D-ribose 1-diphosphate binding. Phe-34–Phe-35 is a binding site for orotate. 5-phospho-alpha-D-ribose 1-diphosphate-binding positions include Tyr-72–Lys-73, Arg-99, Lys-100, Lys-103, His-105, and Asp-124–Ala-132. The orotate site is built by Thr-128 and Arg-157.

The protein belongs to the purine/pyrimidine phosphoribosyltransferase family. PyrE subfamily. In terms of assembly, homodimer. The cofactor is Mg(2+).

It catalyses the reaction orotidine 5'-phosphate + diphosphate = orotate + 5-phospho-alpha-D-ribose 1-diphosphate. Its pathway is pyrimidine metabolism; UMP biosynthesis via de novo pathway; UMP from orotate: step 1/2. Its function is as follows. Catalyzes the transfer of a ribosyl phosphate group from 5-phosphoribose 1-diphosphate to orotate, leading to the formation of orotidine monophosphate (OMP). The polypeptide is Orotate phosphoribosyltransferase (Pseudomonas fluorescens (strain Pf0-1)).